We begin with the raw amino-acid sequence, 490 residues long: Cytochrome P450 monooxygenase anuE (490 aa).

C405 is a binding site for heme.

This sequence belongs to the cytochrome P450 family. Heme serves as cofactor.

It catalyses the reaction 2-hydroxymethyl-3-pentylphenol + reduced [NADPH--hemoprotein reductase] + O2 = (8S)-annullatin E + oxidized [NADPH--hemoprotein reductase] + H2O + H(+). The protein operates within secondary metabolite biosynthesis. Cytochrome P450 monooxygenase; part of the gene cluster that mediates the biosynthesis of annullatin D, an alkylated aromatic polyketide with a fused dihydrobenzofuran lactone ring system that exhibits potent agonistic activities toward the cannabinoid receptors. Within the pathway, anuE catalyzes the hydroxylation of 2-hydroxymethyl-3-pentylphenol at the side chain to produce (8S)-annullatin E. The annullatin backbone 2-hydroxymethyl-3-pentylphenol is assembled from one acetyl-CoA starter unit and 5 malonyl-CoA elongation units by cooperation of the highly reducing polyketide synthase anuA, the short-chain dehydrogenase anuB and the oxidoreductase anuC, before being hydroxylated at the C-5 alkyl chain by the cytochrome P450 monooxygenase anuE to form (8S)-annullatin E. The prenyltransferase anuH subsequently installs one isoprenyl group at the benzene ring to form (8S)-annullatin J. Enzymatic or nonenzymatic dihydro-benzofuran ring formation between the prenyl and the phenolic hydroxyl groups in (8S)-annullatin J results in two diastereomers (2S,9S)-annullatin H and compound 12. The intermediate (2S,9S)-annullatin H is then converted to (2S,9S)-annullatin D by the FAD-linked oxidoreductase anuG-catalyzed five-member lactone ring formation. The isomer 12 acts as a substrate for the short-chain dehydrogenase anuF and is oxidized to (2R)-annullatin F, which is subsequently acetylated by an acetyltransferase leading to (2R)-annullatin G formation. The remaining enzymes identified within the cluster, anuD, anuI and anuJ, seem not to be involved in annullatin biosynthesis. The sequence is that of Cytochrome P450 monooxygenase anuE from Penicillium roqueforti (strain FM164).